Here is a 199-residue protein sequence, read N- to C-terminus: Large ribosomal subunit protein bL25 (199 aa).

It belongs to the bacterial ribosomal protein bL25 family. CTC subfamily. Part of the 50S ribosomal subunit; part of the 5S rRNA/L5/L18/L25 subcomplex. Contacts the 5S rRNA. Binds to the 5S rRNA independently of L5 and L18.

Its function is as follows. This is one of the proteins that binds to the 5S RNA in the ribosome where it forms part of the central protuberance. The polypeptide is Large ribosomal subunit protein bL25 (Pelodictyon phaeoclathratiforme (strain DSM 5477 / BU-1)).